Consider the following 412-residue polypeptide: Putative competence-damage inducible protein (412 aa).

Belongs to the CinA family.

The chain is Putative competence-damage inducible protein from Bacillus mycoides (strain KBAB4) (Bacillus weihenstephanensis).